A 40-amino-acid polypeptide reads, in one-letter code: Photosystem II reaction center protein J (40 aa).

A helical membrane pass occupies residues 8–28 (IPLWLVGTVAGILVIGLIGIF).

Belongs to the PsbJ family. PSII is composed of 1 copy each of membrane proteins PsbA, PsbB, PsbC, PsbD, PsbE, PsbF, PsbH, PsbI, PsbJ, PsbK, PsbL, PsbM, PsbT, PsbX, PsbY, PsbZ, Psb30/Ycf12, at least 3 peripheral proteins of the oxygen-evolving complex and a large number of cofactors. It forms dimeric complexes.

It is found in the plastid. It localises to the chloroplast thylakoid membrane. Functionally, one of the components of the core complex of photosystem II (PSII). PSII is a light-driven water:plastoquinone oxidoreductase that uses light energy to abstract electrons from H(2)O, generating O(2) and a proton gradient subsequently used for ATP formation. It consists of a core antenna complex that captures photons, and an electron transfer chain that converts photonic excitation into a charge separation. This chain is Photosystem II reaction center protein J, found in Gnetum parvifolium (Small-leaved jointfir).